Here is a 93-residue protein sequence, read N- to C-terminus: Large ribosomal subunit protein uL23 (93 aa).

Belongs to the universal ribosomal protein uL23 family. In terms of assembly, part of the 50S ribosomal subunit. Contacts protein L29, and trigger factor when it is bound to the ribosome.

Its function is as follows. One of the early assembly proteins it binds 23S rRNA. One of the proteins that surrounds the polypeptide exit tunnel on the outside of the ribosome. Forms the main docking site for trigger factor binding to the ribosome. This is Large ribosomal subunit protein uL23 from Campylobacter curvus (strain 525.92).